The following is a 298-amino-acid chain: GTPase Era (298 aa).

An Era-type G domain is found at 3–170 (KSGFVAILGR…IKLLTDNLEE (168 aa)). Residues 11-18 (GRPNVGKS) are G1. 11–18 (GRPNVGKS) contributes to the GTP binding site. The tract at residues 37–41 (QTTRN) is G2. The tract at residues 58-61 (DTPG) is G3. GTP contacts are provided by residues 58-62 (DTPGI) and 120-123 (NKID). Residues 120-123 (NKID) are G4. The interval 149-151 (ISA) is G5. The KH type-2 domain occupies 201-279 (TQQEVPHSVA…YLETWVKVKK (79 aa)).

Belongs to the TRAFAC class TrmE-Era-EngA-EngB-Septin-like GTPase superfamily. Era GTPase family. Monomer.

It localises to the cytoplasm. The protein localises to the cell membrane. Its function is as follows. An essential GTPase that binds both GDP and GTP, with rapid nucleotide exchange. Plays a role in 16S rRNA processing and 30S ribosomal subunit biogenesis and possibly also in cell cycle regulation and energy metabolism. The sequence is that of GTPase Era from Streptococcus pyogenes serotype M4 (strain MGAS10750).